The following is a 418-amino-acid chain: Glutamyl-tRNA(Gln) amidotransferase subunit D (418 aa).

An Asparaginase/glutaminase domain is found at 74–405 (KNISILSTGG…EDAKELMSKD (332 aa)). Catalysis depends on residues Thr-84, Thr-160, Asp-161, and Lys-237.

The protein belongs to the asparaginase 1 family. GatD subfamily. Heterodimer of GatD and GatE.

It carries out the reaction L-glutamyl-tRNA(Gln) + L-glutamine + ATP + H2O = L-glutaminyl-tRNA(Gln) + L-glutamate + ADP + phosphate + H(+). In terms of biological role, allows the formation of correctly charged Gln-tRNA(Gln) through the transamidation of misacylated Glu-tRNA(Gln) in organisms which lack glutaminyl-tRNA synthetase. The reaction takes place in the presence of glutamine and ATP through an activated gamma-phospho-Glu-tRNA(Gln). The GatDE system is specific for glutamate and does not act on aspartate. The protein is Glutamyl-tRNA(Gln) amidotransferase subunit D of Methanococcus maripaludis (strain C7 / ATCC BAA-1331).